Consider the following 196-residue polypeptide: Potassium-transporting ATPase KdpC subunit (196 aa).

A helical membrane pass occupies residues 7–27 (PAIVSAGLFTVLLGLAYPLAV).

This sequence belongs to the KdpC family. The system is composed of three essential subunits: KdpA, KdpB and KdpC.

The protein localises to the cell inner membrane. Functionally, part of the high-affinity ATP-driven potassium transport (or Kdp) system, which catalyzes the hydrolysis of ATP coupled with the electrogenic transport of potassium into the cytoplasm. This subunit acts as a catalytic chaperone that increases the ATP-binding affinity of the ATP-hydrolyzing subunit KdpB by the formation of a transient KdpB/KdpC/ATP ternary complex. In Caulobacter sp. (strain K31), this protein is Potassium-transporting ATPase KdpC subunit.